We begin with the raw amino-acid sequence, 138 residues long: Cofilin (138 aa).

An ADF-H domain is found at 2–136 (SSGVQPTQEC…TKDALFEKAT (135 aa)).

The protein belongs to the actin-binding proteins ADF family.

It is found in the cytoplasm. Its subcellular location is the cytoskeleton. The protein localises to the nucleus matrix. Its function is as follows. Controls reversibly actin polymerization and depolymerization in a pH-sensitive manner. It has the ability to bind G- and F-actin in a 1:1 ratio of cofilin to actin. Binding to F-actin is regulated by tropomyosin. It is the major component of intranuclear and cytoplasmic actin rods. Required for accumulation of actin at the cell division site via depolymerizing actin at the cell ends. In association with myosin II has a role in the assembly of the contractile ring via severing actin filaments. Involved in the maintenance of the contractile ring once formed. In association with profilin and capping protein, has a role in the mitotic reorganization of the actin cytoskeleton. The sequence is that of Cofilin (COF1) from Cryptococcus neoformans var. neoformans serotype D (strain B-3501A) (Filobasidiella neoformans).